Here is a 97-residue protein sequence, read N- to C-terminus: MLCAIYKSARKAQTYLFVNKRDDFSSVPEGLMKTFGTPNLVTLINLATKDKLAMADLEKVKKNLIEKGFYLQLPPPQEDLLKEHKAAMAAEKEQGEL.

Positions 1–85 constitute a YcgL domain; the sequence is MLCAIYKSAR…PQEDLLKEHK (85 aa).

The protein is YcgL domain-containing protein CPS_3517 of Colwellia psychrerythraea (strain 34H / ATCC BAA-681) (Vibrio psychroerythus).